A 130-amino-acid chain; its full sequence is Small ribosomal subunit protein uS9 (130 aa).

This sequence belongs to the universal ribosomal protein uS9 family.

The polypeptide is Small ribosomal subunit protein uS9 (Neisseria meningitidis serogroup C (strain 053442)).